Here is a 296-residue protein sequence, read N- to C-terminus: Ribosomal protein L11 methyltransferase (296 aa).

The S-adenosyl-L-methionine site is built by Thr-145, Gly-166, Asp-188, and Asn-230.

This sequence belongs to the methyltransferase superfamily. PrmA family.

Its subcellular location is the cytoplasm. The enzyme catalyses L-lysyl-[protein] + 3 S-adenosyl-L-methionine = N(6),N(6),N(6)-trimethyl-L-lysyl-[protein] + 3 S-adenosyl-L-homocysteine + 3 H(+). Methylates ribosomal protein L11. This Histophilus somni (strain 2336) (Haemophilus somnus) protein is Ribosomal protein L11 methyltransferase.